The chain runs to 166 residues: Large ribosomal subunit protein uL10 (166 aa).

This sequence belongs to the universal ribosomal protein uL10 family. Part of the ribosomal stalk of the 50S ribosomal subunit. The N-terminus interacts with L11 and the large rRNA to form the base of the stalk. The C-terminus forms an elongated spine to which L12 dimers bind in a sequential fashion forming a multimeric L10(L12)X complex.

Functionally, forms part of the ribosomal stalk, playing a central role in the interaction of the ribosome with GTP-bound translation factors. This is Large ribosomal subunit protein uL10 from Oceanobacillus iheyensis (strain DSM 14371 / CIP 107618 / JCM 11309 / KCTC 3954 / HTE831).